A 186-amino-acid chain; its full sequence is dCTP deaminase (186 aa).

107–112 is a binding site for dCTP; that stretch reads KSTYAR. Residue Glu133 is the Proton donor/acceptor of the active site. The dCTP site is built by Gln152, Tyr166, Lys175, and Gln176.

The protein belongs to the dCTP deaminase family. In terms of assembly, homotrimer.

The catalysed reaction is dCTP + H2O + H(+) = dUTP + NH4(+). The protein operates within pyrimidine metabolism; dUMP biosynthesis; dUMP from dCTP (dUTP route): step 1/2. Functionally, catalyzes the deamination of dCTP to dUTP. The chain is dCTP deaminase from Wolinella succinogenes (strain ATCC 29543 / DSM 1740 / CCUG 13145 / JCM 31913 / LMG 7466 / NCTC 11488 / FDC 602W) (Vibrio succinogenes).